The primary structure comprises 104 residues: Cytochrome c oxidase assembly factor 6 (104 aa).

The interval 1–22 (MGLFSFDGGKKESQPPNTRSQR) is disordered. The CHCH domain occupies 22–76 (RKLCWESRDAFFQCLDKADILDAMDPKNSKSIKSHCKVENEKFEENCAHSWIKYF). The short motif at 25–35 (CWESRDAFFQC) is the Cx9C motif element. Disulfide bonds link C25/C68 and C35/C57. The Cx10C motif motif lies at 57-68 (CKVENEKFEENC).

Belongs to the cytochrome c oxidase subunit 6B family. As to quaternary structure, interacts with COX2.

It localises to the cytoplasm. The protein resides in the nucleus. The protein localises to the mitochondrion intermembrane space. Functionally, involved in the maturation of the mitochondrial respiratory chain complex IV subunit MT-CO2/COX2. Thereby, may regulate early steps of complex IV assembly. Mitochondrial respiratory chain complex IV or cytochrome c oxidase is the component of the respiratory chain that catalyzes the transfer of electrons from intermembrane space cytochrome c to molecular oxygen in the matrix and as a consequence contributes to the proton gradient involved in mitochondrial ATP synthesis. May also be required for efficient formation of respiratory supercomplexes comprised of complexes III and IV. The chain is Cytochrome c oxidase assembly factor 6 from Saccharomyces cerevisiae (strain ATCC 204508 / S288c) (Baker's yeast).